Consider the following 550-residue polypeptide: Carboxypeptidase Y homolog A (550 aa).

The signal sequence occupies residues 1 to 18 (MKSLVLGLLVGSAIASGP). Positions 19 to 131 (LQHVLHAPPD…KLSQYDLRIK (113 aa)) are excised as a propeptide. Positions 20–39 (QHVLHAPPDPEPKPEPEPQV) are disordered. 5 disulfide bridges follow: cysteine 185–cysteine 424, cysteine 319–cysteine 333, cysteine 343–cysteine 366, cysteine 350–cysteine 359, and cysteine 388–cysteine 394. N-linked (GlcNAc...) asparagine glycosylation is found at asparagine 203 and asparagine 216. Residue serine 272 is part of the active site. A glycan (N-linked (GlcNAc...) asparagine) is linked at asparagine 289. An N-linked (GlcNAc...) asparagine glycan is attached at asparagine 387. The active site involves aspartate 463. Asparagine 493 and asparagine 514 each carry an N-linked (GlcNAc...) asparagine glycan. Histidine 525 is a catalytic residue.

It belongs to the peptidase S10 family.

Its subcellular location is the vacuole. The enzyme catalyses Release of a C-terminal amino acid with broad specificity.. Functionally, vacuolar carboxypeptidase involved in degradation of small peptides. Digests preferentially peptides containing an aliphatic or hydrophobic residue in P1' position, as well as methionine, leucine or phenylalanine in P1 position of ester substrate. The sequence is that of Carboxypeptidase Y homolog A (CPYA) from Paracoccidioides brasiliensis (strain Pb18).